We begin with the raw amino-acid sequence, 78 residues long: MGSLSIWHWLIVLLIVALVFGTKKLRNIGSDLGGAVKGFKEGMKDGETPEGQQRDQLSRTNTVDVDAKEKAPHSGDSR.

The helical transmembrane segment at 1–21 threads the bilayer; sequence MGSLSIWHWLIVLLIVALVFG. Composition is skewed to basic and acidic residues over residues 39 to 57 and 65 to 78; these read FKEG…RDQL and VDAK…GDSR. Positions 39-78 are disordered; sequence FKEGMKDGETPEGQQRDQLSRTNTVDVDAKEKAPHSGDSR.

This sequence belongs to the TatA/E family. As to quaternary structure, the Tat system comprises two distinct complexes: a TatABC complex, containing multiple copies of TatA, TatB and TatC subunits, and a separate TatA complex, containing only TatA subunits. Substrates initially bind to the TatABC complex, which probably triggers association of the separate TatA complex to form the active translocon.

The protein localises to the cell inner membrane. Functionally, part of the twin-arginine translocation (Tat) system that transports large folded proteins containing a characteristic twin-arginine motif in their signal peptide across membranes. TatA could form the protein-conducting channel of the Tat system. This is Sec-independent protein translocase protein TatA from Paraburkholderia phymatum (strain DSM 17167 / CIP 108236 / LMG 21445 / STM815) (Burkholderia phymatum).